Reading from the N-terminus, the 270-residue chain is Orotidine 5'-phosphate decarboxylase (270 aa).

Residues D39, 61-63 (KTH), 93-102 (DRKFADIGNT), Y221, and R239 each bind substrate. K95 acts as the Proton donor in catalysis.

The protein belongs to the OMP decarboxylase family.

The catalysed reaction is orotidine 5'-phosphate + H(+) = UMP + CO2. It functions in the pathway pyrimidine metabolism; UMP biosynthesis via de novo pathway; UMP from orotate: step 2/2. This Candida albicans (strain SC5314 / ATCC MYA-2876) (Yeast) protein is Orotidine 5'-phosphate decarboxylase (URA3).